The primary structure comprises 121 residues: Large ribosomal subunit protein bL12 (121 aa).

This sequence belongs to the bacterial ribosomal protein bL12 family. In terms of assembly, homodimer. Part of the ribosomal stalk of the 50S ribosomal subunit. Forms a multimeric L10(L12)X complex, where L10 forms an elongated spine to which 2 to 4 L12 dimers bind in a sequential fashion. Binds GTP-bound translation factors.

Its function is as follows. Forms part of the ribosomal stalk which helps the ribosome interact with GTP-bound translation factors. Is thus essential for accurate translation. The protein is Large ribosomal subunit protein bL12 of Tolumonas auensis (strain DSM 9187 / NBRC 110442 / TA 4).